The sequence spans 303 residues: Methionyl-tRNA formyltransferase (303 aa).

110 to 113 (SLLP) provides a ligand contact to (6S)-5,6,7,8-tetrahydrofolate.

It belongs to the Fmt family.

The catalysed reaction is L-methionyl-tRNA(fMet) + (6R)-10-formyltetrahydrofolate = N-formyl-L-methionyl-tRNA(fMet) + (6S)-5,6,7,8-tetrahydrofolate + H(+). Attaches a formyl group to the free amino group of methionyl-tRNA(fMet). The formyl group appears to play a dual role in the initiator identity of N-formylmethionyl-tRNA by promoting its recognition by IF2 and preventing the misappropriation of this tRNA by the elongation apparatus. The polypeptide is Methionyl-tRNA formyltransferase (Ehrlichia ruminantium (strain Welgevonden)).